The sequence spans 199 residues: Protein shisa-like-1 (199 aa).

Positions 1–25 (MTSCGQQSLNVLAVLFSLLFSAVLS) are cleaved as a signal peptide. At 26-97 (AHFRVCEPYT…SEGYMHNNYT (72 aa)) the chain is on the extracellular side. N53 and N95 each carry an N-linked (GlcNAc...) asparagine glycan. A helical transmembrane segment spans residues 98-118 (ALLGVWIYGFFVLMLLVLDLL). At 119 to 199 (YYSAMNYDIC…PLMTFQSSSA (81 aa)) the chain is on the cytoplasmic side. The segment at 146–199 (PRRWGNPARAPRPGQRAPQPQPPPGPLPQAPQAVHTLRGDAHSPPLMTFQSSSA) is disordered. A compositionally biased stretch (low complexity) spans 152 to 163 (PARAPRPGQRAP). A compositionally biased stretch (pro residues) spans 164–174 (QPQPPPGPLPQ).

The protein belongs to the shisa family.

It is found in the membrane. This Homo sapiens (Human) protein is Protein shisa-like-1.